The sequence spans 238 residues: Ribonuclease PH (238 aa).

Residues R86 and 124–126 each bind phosphate; that span reads GTR.

It belongs to the RNase PH family. In terms of assembly, homohexameric ring arranged as a trimer of dimers.

It carries out the reaction tRNA(n+1) + phosphate = tRNA(n) + a ribonucleoside 5'-diphosphate. Its function is as follows. Phosphorolytic 3'-5' exoribonuclease that plays an important role in tRNA 3'-end maturation. Removes nucleotide residues following the 3'-CCA terminus of tRNAs; can also add nucleotides to the ends of RNA molecules by using nucleoside diphosphates as substrates, but this may not be physiologically important. Probably plays a role in initiation of 16S rRNA degradation (leading to ribosome degradation) during starvation. This Sphingopyxis alaskensis (strain DSM 13593 / LMG 18877 / RB2256) (Sphingomonas alaskensis) protein is Ribonuclease PH.